We begin with the raw amino-acid sequence, 997 residues long: Glutamate [NMDA] receptor subunit 1 (997 aa).

The first 26 residues, 1-26 (MAVAEFVFCWPLFELAIVLLVAPIHA), serve as a signal peptide directing secretion. At 27-573 (AQRHTASDNP…TLVSFLQPFS (547 aa)) the chain is on the extracellular side. N-linked (GlcNAc...) asparagine glycosylation is found at Asn-258, Asn-314, Asn-345, Asn-397, Asn-454, Asn-481, and Asn-501. Glycine contacts are provided by residues 530 to 532 (PLT) and Arg-537. Residues 574 to 594 (NTLWILVMVSVHVVALVLYLL) form a helical membrane-spanning segment. Residues 595–651 (DRFSPFGRFKLSHSDSNEEKALNLSSAVWFAWGVLLNSGIGEGTPRSFSARVLGMVW) are Cytoplasmic-facing. Residues 652 to 672 (AGFAMIIVASYTANLAAFLVL) form a helical membrane-spanning segment. The Extracellular segment spans residues 673–831 (ERPKTKLSGI…KTPNTLGLKN (159 aa)). A glycan (N-linked (GlcNAc...) asparagine) is linked at Asn-693. The glycine site is built by Ser-703 and Asp-747. Residues 832 to 852 (MAGVFILVGVGIAGGVGLIII) traverse the membrane as a helical segment. Residues 853–997 (EVIYKKHQVK…YTSDVSHLVV (145 aa)) are Cytoplasmic-facing. The segment at 947–997 (ELGKPGQSPKVMSANQPGMPMPMLGKTRPQQSVLPPRYSPGYTSDVSHLVV) is disordered. Positions 987–997 (GYTSDVSHLVV) are enriched in polar residues.

This sequence belongs to the glutamate-gated ion channel (TC 1.A.10.1) family. Forms a heteromeric NMDA channel with Nmdar2.

It localises to the cell membrane. It is found in the postsynaptic cell membrane. The protein resides in the postsynaptic density. NMDA receptor subtype of glutamate-gated ion channels with high calcium permeability and voltage-dependent sensitivity to magnesium. Mediated by glycine. This protein plays a key role in synaptic plasticity, synaptogenesis, excitotoxicity, memory acquisition and learning. It mediates neuronal functions in glutamate neurotransmission. Is involved in the cell surface targeting of NMDA receptors. Plays a role in associative learning and in long-term memory consolidation. This is Glutamate [NMDA] receptor subunit 1 from Drosophila erecta (Fruit fly).